Here is a 96-residue protein sequence, read N- to C-terminus: Citrate lyase acyl carrier protein (96 aa).

Serine 14 carries the O-(phosphoribosyl dephospho-coenzyme A)serine modification.

This sequence belongs to the CitD family. Oligomer with a subunit composition of (alpha,beta,gamma)6.

Its subcellular location is the cytoplasm. Covalent carrier of the coenzyme of citrate lyase. The sequence is that of Citrate lyase acyl carrier protein from Lactococcus lactis subsp. lactis (strain IL1403) (Streptococcus lactis).